Reading from the N-terminus, the 239-residue chain is Ribosomal RNA small subunit methyltransferase G (239 aa).

S-adenosyl-L-methionine is bound by residues G78, F83, 129–130 (AE), and R148.

Belongs to the methyltransferase superfamily. RNA methyltransferase RsmG family.

Its subcellular location is the cytoplasm. In terms of biological role, specifically methylates the N7 position of a guanine in 16S rRNA. In Clostridium botulinum (strain 657 / Type Ba4), this protein is Ribosomal RNA small subunit methyltransferase G.